The following is a 301-amino-acid chain: Chitin deacetylase 1 (301 aa).

The signal sequence occupies residues 1–24; sequence MKIFNTIQSVLFAAFFLKQGNCLA. Asn26, Asn50, and Asn68 each carry an N-linked (GlcNAc...) asparagine glycan. An intrachain disulfide couples Cys107 to Cys290. The 181-residue stretch at 108–288 folds into the NodB homology domain; the sequence is FKLSQTFDDG…LIGSDQLTIA (181 aa). Residue Asp115 is the Proton acceptor of the active site. Acetate is bound at residue Asp115. The Co(2+) site is built by Asp116, His162, and His166. An N-linked (GlcNAc...) asparagine glycan is attached at Asn189. Tyr203 lines the acetate pocket. The active-site Proton donor is His263.

This sequence belongs to the polysaccharide deacetylase family. Co(2+) is required as a cofactor.

Its subcellular location is the prospore. It catalyses the reaction [(1-&gt;4)-N-acetyl-beta-D-glucosaminyl](n) + n H2O = chitosan + n acetate. Its function is as follows. Hydrolyzes the N-acetamido groups of N-acetyl-D-glucosamine residues in chitin to form chitosan and acetate. Chitosan is a component of the spore wall. In Saccharomyces cerevisiae (strain ATCC 204508 / S288c) (Baker's yeast), this protein is Chitin deacetylase 1.